The primary structure comprises 103 residues: uncharacterized protein (103 aa).

2 helical membrane passes run 42–62 and 65–85; these read PFPLLRLLSVTLFISSLVLLA and TGTLNIFSYSYVVMVVLFICA.

It localises to the membrane. This is an uncharacterized protein from Saccharomyces cerevisiae (strain ATCC 204508 / S288c) (Baker's yeast).